A 205-amino-acid polypeptide reads, in one-letter code: Isochorismatase domain-containing protein 2 (205 aa).

Belongs to the isochorismatase family. As to quaternary structure, interacts with CDKN2A.

It localises to the cytoplasm. The protein resides in the nucleus. This chain is Isochorismatase domain-containing protein 2 (ISOC2), found in Macaca fascicularis (Crab-eating macaque).